We begin with the raw amino-acid sequence, 122 residues long: Large ribosomal subunit protein uL14 (122 aa).

Belongs to the universal ribosomal protein uL14 family. Part of the 50S ribosomal subunit. Forms a cluster with proteins L3 and L19. In the 70S ribosome, L14 and L19 interact and together make contacts with the 16S rRNA in bridges B5 and B8.

In terms of biological role, binds to 23S rRNA. Forms part of two intersubunit bridges in the 70S ribosome. The sequence is that of Large ribosomal subunit protein uL14 from Mycoplasmopsis pulmonis (strain UAB CTIP) (Mycoplasma pulmonis).